The primary structure comprises 165 residues: Ribosome maturation factor RimM (165 aa).

Positions 94-165 constitute a PRC barrel domain; sequence EDEFYIADLN…YVILNYQTKV (72 aa).

This sequence belongs to the RimM family. As to quaternary structure, binds ribosomal protein uS19.

It is found in the cytoplasm. In terms of biological role, an accessory protein needed during the final step in the assembly of 30S ribosomal subunit, possibly for assembly of the head region. Essential for efficient processing of 16S rRNA. May be needed both before and after RbfA during the maturation of 16S rRNA. It has affinity for free ribosomal 30S subunits but not for 70S ribosomes. The sequence is that of Ribosome maturation factor RimM from Rickettsia prowazekii (strain Madrid E).